Here is a 428-residue protein sequence, read N- to C-terminus: Oxysterol-binding protein 9 (428 aa).

Positions 1-11 (MTEVQSITTSG) are enriched in polar residues. Disordered stretches follow at residues 1–32 (MTEV…STTN) and 396–428 (ALIE…KNQK). Low complexity predominate over residues 18 to 32 (SPSSSSSSISSSTTN). The stretch at 389-422 (EEAKKYKALIEDNQRKQKKEKDEKLKKDEKLKKE) forms a coiled coil.

This sequence belongs to the OSBP family.

This Dictyostelium discoideum (Social amoeba) protein is Oxysterol-binding protein 9 (osbI).